The sequence spans 133 residues: uncharacterized protein (133 aa).

This is an uncharacterized protein from Human adenovirus B serotype 7 (HAdV-7).